Reading from the N-terminus, the 191-residue chain is Elongation factor P-like protein (191 aa).

It belongs to the elongation factor P family.

The protein is Elongation factor P-like protein of Photobacterium profundum (strain SS9).